Reading from the N-terminus, the 215-residue chain is Ribonuclease T (215 aa).

The 175-residue stretch at valine 21–phenylalanine 195 folds into the Exonuclease domain. 4 residues coordinate Mg(2+): aspartate 24, glutamate 26, histidine 182, and aspartate 187. Histidine 182 functions as the Proton donor/acceptor in the catalytic mechanism.

It belongs to the RNase T family. As to quaternary structure, homodimer. Mg(2+) is required as a cofactor.

Its function is as follows. Trims short 3' overhangs of a variety of RNA species, leaving a one or two nucleotide 3' overhang. Responsible for the end-turnover of tRNA: specifically removes the terminal AMP residue from uncharged tRNA (tRNA-C-C-A). Also appears to be involved in tRNA biosynthesis. In Wigglesworthia glossinidia brevipalpis, this protein is Ribonuclease T.